Reading from the N-terminus, the 239-residue chain is Ribosomal RNA small subunit methyltransferase G (239 aa).

Residues Gly-79, Phe-84, 130–131 (AE), and Arg-149 contribute to the S-adenosyl-L-methionine site. The interval 218–239 (KKTKTPKKYPRQAGTPSKKPIS) is disordered.

This sequence belongs to the methyltransferase superfamily. RNA methyltransferase RsmG family.

The protein resides in the cytoplasm. Specifically methylates the N7 position of a guanine in 16S rRNA. This is Ribosomal RNA small subunit methyltransferase G from Leuconostoc mesenteroides subsp. mesenteroides (strain ATCC 8293 / DSM 20343 / BCRC 11652 / CCM 1803 / JCM 6124 / NCDO 523 / NBRC 100496 / NCIMB 8023 / NCTC 12954 / NRRL B-1118 / 37Y).